The chain runs to 182 residues: Inosine/xanthosine triphosphatase (182 aa).

This sequence belongs to the YjjX NTPase family. In terms of assembly, homodimer. The cofactor is Mg(2+). Requires Mn(2+) as cofactor.

It catalyses the reaction XTP + H2O = XDP + phosphate + H(+). The enzyme catalyses ITP + H2O = IDP + phosphate + H(+). Functionally, phosphatase that hydrolyzes non-canonical purine nucleotides such as XTP and ITP to their respective diphosphate derivatives. Probably excludes non-canonical purines from DNA/RNA precursor pool, thus preventing their incorporation into DNA/RNA and avoiding chromosomal lesions. In Vibrio parahaemolyticus serotype O3:K6 (strain RIMD 2210633), this protein is Inosine/xanthosine triphosphatase.